Reading from the N-terminus, the 414-residue chain is TAR DNA-binding protein 43 (414 aa).

Residues K79, K84, K95, K102, and K181 each participate in a glycyl lysine isopeptide (Lys-Gly) (interchain with G-Cter in SUMO2) cross-link. RRM domains lie at 104-200 (SDLI…RCTE) and 191-262 (RKVF…NAEP). S183 carries the phosphoserine modification. Residues 216–414 (DVMDVFIPKP…MDSKSSGWGM (199 aa)) are interaction with UBQLN2. Basic and acidic residues predominate over residues 261 to 274 (EPKHNSNRQLERSG). 2 disordered regions span residues 261-303 (EPKH…GNNQ) and 341-373 (ASQQNQSGPSGNNQNQGNMQREPNQAFGSGNNS). A Glycyl lysine isopeptide (Lys-Gly) (interchain with G-Cter in SUMO2) cross-link involves residue K263. Gly residues predominate over residues 275-303 (RFGGNPGGFGNQGGFGNSRGGGAGLGNNQ). S292 carries the post-translational modification Phosphoserine. Position 293 is an omega-N-methylarginine (R293). Positions 342-358 (SQQNQSGPSGNNQNQGN) are enriched in low complexity.

Monomer and component of the SFPQ-NONO complex, which is probably a heterotetramer of two 52 kDa (NONO) and two 100 kDa (SFPQ) subunits. NONO is a component of spliceosome and U5.4/6 snRNP complexes. Interacts with CPNE4 (via VWFA domain). Forms heterodimers with PSPC1; this involves formation of a coiled coil domain by helices from both proteins. Part of complex consisting of SFPQ, NONO and MATR3. Part of a complex consisting of SFPQ, NONO and NR5A1. Part of a complex consisting of SFPQ, NONO and TOP1. Interacts with SPI1. Interacts with RNF43. Interacts with PER1 and PER2. Part of the HDP-RNP complex composed of at least HEXIM1, PRKDC, XRCC5, XRCC6, paraspeckle proteins (SFPQ, NONO, PSPC1, RBM14, and MATR3) and NEAT1 RNA. Interacts (via second RRM domain) with WASL; the interaction is direct. Component of a multiprotein complex with WASL and SFPQ. Interacts with ERCC6. Interacts (via DNA-binding domain) with TET1. Post-translationally, hyperphosphorylated. In terms of processing, ubiquitinated.

The protein resides in the nucleus. It is found in the nucleolus. It localises to the nucleus speckle. Its subcellular location is the chromosome. The protein localises to the mitochondrion. In terms of biological role, DNA- and RNA binding protein, involved in several nuclear processes. Binds the conventional octamer sequence in double-stranded DNA. Also binds single-stranded DNA and RNA at a site independent of the duplex site. Involved in pre-mRNA splicing, probably as a heterodimer with SFPQ. Interacts with U5 snRNA, probably by binding to a purine-rich sequence located on the 3' side of U5 snRNA stem 1b. Together with PSPC1, required for the formation of nuclear paraspeckles. The SFPQ-NONO heteromer associated with MATR3 may play a role in nuclear retention of defective RNAs. The SFPQ-NONO heteromer may be involved in DNA unwinding by modulating the function of topoisomerase I/TOP1. The SFPQ-NONO heteromer may be involved in DNA non-homologous end joining (NHEJ) required for double-strand break repair and V(D)J recombination and may stabilize paired DNA ends. In vitro, the complex strongly stimulates DNA end joining, binds directly to the DNA substrates and cooperates with the Ku70/G22P1-Ku80/XRCC5 (Ku) dimer to establish a functional preligation complex. NONO is involved in transcriptional regulation. The SFPQ-NONO-NR5A1 complex binds to the CYP17 promoter and regulates basal and cAMP-dependent transcriptional activity. NONO binds to an enhancer element in long terminal repeats of endogenous intracisternal A particles (IAPs) and activates transcription. Regulates the circadian clock by repressing the transcriptional activator activity of the CLOCK-BMAL1 heterodimer. Important for the functional organization of GABAergic synapses. Plays a specific and important role in the regulation of synaptic RNAs and GPHN/gephyrin scaffold structure, through the regulation of GABRA2 transcript. Plays a key role during neuronal differentiation by recruiting TET1 to genomic loci and thereby regulating 5-hydroxymethylcytosine levels. Plays a role in the regulation of DNA virus-mediated innate immune response by assembling into the HDP-RNP complex, a complex that serves as a platform for IRF3 phosphorylation and subsequent innate immune response activation through the cGAS-STING pathway. This is TAR DNA-binding protein 43 (TARDBP) from Pongo abelii (Sumatran orangutan).